The sequence spans 772 residues: Phenylalanine--tRNA ligase beta subunit (772 aa).

In terms of domain architecture, tRNA-binding spans 40 to 158; sequence IKPSTNLVFA…DHYKTPNQIF (119 aa). A B5 domain is found at 397 to 468; sequence SVHNVIKNKI…KKISIQEIKP (72 aa). Mg(2+) is bound by residues D446, D452, E455, and D456. One can recognise an FDX-ACB domain in the interval 691–772; that stretch reads SMYHDVIRDI…QEVNNYLKQF (82 aa).

Belongs to the phenylalanyl-tRNA synthetase beta subunit family. Type 1 subfamily. As to quaternary structure, tetramer of two alpha and two beta subunits. Mg(2+) is required as a cofactor.

It localises to the cytoplasm. The enzyme catalyses tRNA(Phe) + L-phenylalanine + ATP = L-phenylalanyl-tRNA(Phe) + AMP + diphosphate + H(+). The sequence is that of Phenylalanine--tRNA ligase beta subunit (pheT) from Ureaplasma parvum serovar 3 (strain ATCC 700970).